Reading from the N-terminus, the 146-residue chain is 3-dehydroquinate dehydratase (146 aa).

The active-site Proton acceptor is the tyrosine 22. 3 residues coordinate substrate: asparagine 73, histidine 79, and aspartate 86. Residue histidine 99 is the Proton donor of the active site. Residues 100–101 and arginine 110 contribute to the substrate site; that span reads VS.

Belongs to the type-II 3-dehydroquinase family. In terms of assembly, homododecamer.

The catalysed reaction is 3-dehydroquinate = 3-dehydroshikimate + H2O. Its pathway is metabolic intermediate biosynthesis; chorismate biosynthesis; chorismate from D-erythrose 4-phosphate and phosphoenolpyruvate: step 3/7. Its function is as follows. Catalyzes a trans-dehydration via an enolate intermediate. In Kineococcus radiotolerans (strain ATCC BAA-149 / DSM 14245 / SRS30216), this protein is 3-dehydroquinate dehydratase.